A 446-amino-acid chain; its full sequence is Rhoptry surface protein CERLI1 (446 aa).

The C2 domain maps to 39-208; sequence KPIGQLYRLM…NQTKNNEKIE (170 aa). Positions 252 to 363 constitute a PH domain; that stretch reads GYLLHSNFYI…ILVSNYKRER (112 aa).

Its subcellular location is the cytoplasmic vesicle. It localises to the secretory vesicle. The protein localises to the rhoptry membrane. Essential for merozoite invasion of host cells by controlling rhoptry secretion. Binds to phosphatidic acid (PA) and phosphatidylinositol 4,5-bisphosphate (PIP2) lipids and thus, likely contributes to the assembly of the machinery that docks or primes the rhoptry to the parasite cell membrane prior to the fusion with the host cell membrane. This chain is Rhoptry surface protein CERLI1, found in Plasmodium falciparum (isolate 3D7).